Consider the following 176-residue polypeptide: MPTNWKDSGLRWYWMVVLVFIADQLSKQWVLANFELRESVELLPFFNFTYLRNYGAAFSFLSDAGGWQRWFFTFVAVGFSTLLTIWLRKQPRQMWRLNLAYTLVIGGALGNLIDRLQHGYVVDFLHFYWNTSHFPAFNIADSAICVGAALIIIDSIITERDDKKKKAQENNNTAKE.

The next 3 helical transmembrane spans lie at 12-32 (WYWMVVLVFIADQLSKQWVLA), 67-87 (WQRWFFTFVAVGFSTLLTIWL), and 94-116 (MWRLNLAYTLVIGGALGNLIDRL). Residues aspartate 123 and aspartate 141 contribute to the active site. Residues 137-157 (FNIADSAICVGAALIIIDSII) traverse the membrane as a helical segment.

Belongs to the peptidase A8 family.

The protein localises to the cell inner membrane. The catalysed reaction is Release of signal peptides from bacterial membrane prolipoproteins. Hydrolyzes -Xaa-Yaa-Zaa-|-(S,diacylglyceryl)Cys-, in which Xaa is hydrophobic (preferably Leu), and Yaa (Ala or Ser) and Zaa (Gly or Ala) have small, neutral side chains.. Its pathway is protein modification; lipoprotein biosynthesis (signal peptide cleavage). This protein specifically catalyzes the removal of signal peptides from prolipoproteins. In Shewanella woodyi (strain ATCC 51908 / MS32), this protein is Lipoprotein signal peptidase.